The chain runs to 143 residues: ATP synthase subunit 9, mitochondrial (143 aa).

The transit peptide at 1 to 62 (MAASRVFAQR…ARQAFAARRQ (62 aa)) directs the protein to the mitochondrion. Helical transmembrane passes span 85–105 (IGLG…LLAV) and 119–139 (AILG…VAMM).

It belongs to the ATPase C chain family. As to quaternary structure, F-type ATPases have 2 components, CF(1) - the catalytic core - and CF(0) - the membrane proton channel. CF(1) has five subunits: alpha(3), beta(3), gamma(1), delta(1), epsilon(1). CF(0) has three main subunits: a, b and c.

Its subcellular location is the mitochondrion membrane. Functionally, mitochondrial membrane ATP synthase (F(1)F(0) ATP synthase or Complex V) produces ATP from ADP in the presence of a proton gradient across the membrane which is generated by electron transport complexes of the respiratory chain. F-type ATPases consist of two structural domains, F(1) - containing the extramembraneous catalytic core and F(0) - containing the membrane proton channel, linked together by a central stalk and a peripheral stalk. During catalysis, ATP synthesis in the catalytic domain of F(1) is coupled via a rotary mechanism of the central stalk subunits to proton translocation. Part of the complex F(0) domain. A homomeric c-ring of probably 10 subunits is part of the complex rotary element. In Emericella nidulans (strain FGSC A4 / ATCC 38163 / CBS 112.46 / NRRL 194 / M139) (Aspergillus nidulans), this protein is ATP synthase subunit 9, mitochondrial (atp9).